The primary structure comprises 119 residues: Small ribosomal subunit protein uS13m (119 aa).

Belongs to the universal ribosomal protein uS13 family. As to quaternary structure, part of the small ribosomal subunit.

Its subcellular location is the mitochondrion. Located at the top of the head of the small subunit, it contacts several helices of the small subunit rRNA. The polypeptide is Small ribosomal subunit protein uS13m (RPS13) (Acanthamoeba castellanii (Amoeba)).